The primary structure comprises 419 residues: MDIALSSDALDVSFHPDEGVHQIAVGLISGKVQLFDYGAMFHNQSTQPDESRTSGKAYRRVWSVRPSHKSCRGVAFDASGSNLFCIFKDKSIIALDPSDGHVKARWPRAHESAPSRILPIHEGLMATGDDDGIVRLWDPRCPPEGDAEAKPLRSYDHHSDWITDMLWCTHLDPPRSKKKDQEDDLKRKRDEERARSRLIVTSGDGTLSVIDIHGGKKGVEVSEDQEDELLSIASIKNGKKLVVGTQLGVLSLWAPDRGLLDHADRFPGHPSSVDALCTLDQDTVLTGSSDGLIRVVQLFPHKLLGIVGDHGGMPIECMKRKGHLIASIGHGNECKLTDLAPLLEEGDVETDAAEPEPAVMLVSDEAHLIARSADGSDESAGESDVMQPPPATKRRTAKSKAGKKSVHDVDQHASFFADL.

7 WD repeats span residues 4-45, 66-105, 108-147, 180-220, 224-263, 268-308, and 351-390; these read ALSS…HNQS, PSHK…VKAR, RAHE…EGDA, DQED…KGVE, DQED…LDHA, GHPS…GIVG, and DAAE…QPPP. A disordered region spans residues 172–192; sequence DPPRSKKKDQEDDLKRKRDEE. The interval 372–408 is disordered; sequence SADGSDESAGESDVMQPPPATKRRTAKSKAGKKSVHD. The span at 392–404 shows a compositional bias: basic residues; the sequence is TKRRTAKSKAGKK.

This sequence belongs to the WD repeat WDR55 family.

The protein resides in the nucleus. It is found in the nucleolus. This is WD repeat-containing protein JIP5 (JIP5) from Malassezia globosa (strain ATCC MYA-4612 / CBS 7966) (Dandruff-associated fungus).